The primary structure comprises 570 residues: Protein misato homolog 1 (570 aa).

S495 carries the phosphoserine modification.

Belongs to the misato family.

It localises to the mitochondrion outer membrane. It is found in the cytoplasm. Involved in the regulation of mitochondrial distribution and morphology. Required for mitochondrial fusion and mitochondrial network formation. The chain is Protein misato homolog 1 (MSTO1) from Pongo pygmaeus (Bornean orangutan).